The primary structure comprises 433 residues: 23S rRNA (uracil(1939)-C(5))-methyltransferase RlmD (433 aa).

The TRAM domain maps to 10–68; that stretch reads RTTTRQIITVSVNDLDSFGQGVARHNGKTLFIPGLLPQENAEVTVTEDKKQYARAKVVR. Interaction with RNA regions lie at residues 23–40 and 58–63; these read DLDS…KTLF and KKQYAR. Residues Cys81, Cys87, Cys90, and Cys162 each coordinate [4Fe-4S] cluster. Residues Gln265, Phe294, Asn299, Glu315, Asn342, and Asp363 each coordinate S-adenosyl-L-methionine. Catalysis depends on Cys389, which acts as the Nucleophile.

This sequence belongs to the class I-like SAM-binding methyltransferase superfamily. RNA M5U methyltransferase family. RlmD subfamily.

The enzyme catalyses uridine(1939) in 23S rRNA + S-adenosyl-L-methionine = 5-methyluridine(1939) in 23S rRNA + S-adenosyl-L-homocysteine + H(+). Catalyzes the formation of 5-methyl-uridine at position 1939 (m5U1939) in 23S rRNA. In Escherichia coli (strain K12), this protein is 23S rRNA (uracil(1939)-C(5))-methyltransferase RlmD.